We begin with the raw amino-acid sequence, 364 residues long: tRNA 2-selenouridine synthase (364 aa).

Residues 14-137 enclose the Rhodanese domain; sequence LLADTPLIDV…LRQTAIQATW (124 aa). The active-site S-selanylcysteine intermediate is the cysteine 97.

It belongs to the SelU family. As to quaternary structure, monomer.

It catalyses the reaction 5-methylaminomethyl-2-thiouridine(34) in tRNA + selenophosphate + (2E)-geranyl diphosphate + H2O + H(+) = 5-methylaminomethyl-2-selenouridine(34) in tRNA + (2E)-thiogeraniol + phosphate + diphosphate. The enzyme catalyses 5-methylaminomethyl-2-thiouridine(34) in tRNA + (2E)-geranyl diphosphate = 5-methylaminomethyl-S-(2E)-geranyl-thiouridine(34) in tRNA + diphosphate. The catalysed reaction is 5-methylaminomethyl-S-(2E)-geranyl-thiouridine(34) in tRNA + selenophosphate + H(+) = 5-methylaminomethyl-2-(Se-phospho)selenouridine(34) in tRNA + (2E)-thiogeraniol. It carries out the reaction 5-methylaminomethyl-2-(Se-phospho)selenouridine(34) in tRNA + H2O = 5-methylaminomethyl-2-selenouridine(34) in tRNA + phosphate. In terms of biological role, involved in the post-transcriptional modification of the uridine at the wobble position (U34) of tRNA(Lys), tRNA(Glu) and tRNA(Gln). Catalyzes the conversion of 2-thiouridine (S2U-RNA) to 2-selenouridine (Se2U-RNA). Acts in a two-step process involving geranylation of 2-thiouridine (S2U) to S-geranyl-2-thiouridine (geS2U) and subsequent selenation of the latter derivative to 2-selenouridine (Se2U) in the tRNA chain. The protein is tRNA 2-selenouridine synthase of Salmonella typhi.